The primary structure comprises 106 residues: Large ribosomal subunit protein bL31B (106 aa).

The interval 85 to 106 (PVQVAEEPVAKGKKKPSLKKKK) is disordered. The segment covering 95-106 (KGKKKPSLKKKK) has biased composition (basic residues).

This sequence belongs to the bacterial ribosomal protein bL31 family. Type B subfamily. Part of the 50S ribosomal subunit.

This chain is Large ribosomal subunit protein bL31B, found in Chlamydia felis (strain Fe/C-56) (Chlamydophila felis).